The chain runs to 446 residues: Tubulin alpha-1B chain (446 aa).

Glutamine 11 serves as a coordination point for GTP. The interval 34–55 (GRLMDDSPSKHDSGSTFFSETG) is disordered. Over residues 35–46 (RLMDDSPSKHDS) the composition is skewed to basic and acidic residues. Positions 69, 138, 142, 143, 177, 204, and 226 each coordinate GTP. Glutamate 69 contacts Mg(2+). Residue glutamate 252 is part of the active site.

It belongs to the tubulin family. As to quaternary structure, dimer of alpha and beta chains. A typical microtubule is a hollow water-filled tube with an outer diameter of 25 nm and an inner diameter of 15 nM. Alpha-beta heterodimers associate head-to-tail to form protofilaments running lengthwise along the microtubule wall with the beta-tubulin subunit facing the microtubule plus end conferring a structural polarity. Microtubules usually have 13 protofilaments but different protofilament numbers can be found in some organisms and specialized cells. The cofactor is Mg(2+).

The protein resides in the cytoplasm. The protein localises to the cytoskeleton. It catalyses the reaction GTP + H2O = GDP + phosphate + H(+). Tubulin is the major constituent of microtubules, a cylinder consisting of laterally associated linear protofilaments composed of alpha- and beta-tubulin heterodimers. Microtubules grow by the addition of GTP-tubulin dimers to the microtubule end, where a stabilizing cap forms. Below the cap, tubulin dimers are in GDP-bound state, owing to GTPase activity of alpha-tubulin. This Schizophyllum commune (Split gill fungus) protein is Tubulin alpha-1B chain (TUB-1B).